Reading from the N-terminus, the 1972-residue chain is Myosin-11 (1972 aa).

Residues Ser8, Ser23, and Ser40 each carry the phosphoserine modification. Positions 31 to 81 constitute a Myosin N-terminal SH3-like domain; it reads AAKRLVWVPSEKQGFEAASIKEEKGDEVVVELVENGKKVTVGKDDIQKMNP. A Myosin motor domain is found at 85-783; sequence SKVEDMAELT…VLAHLEEERD (699 aa). An N6,N6,N6-trimethyllysine modification is found at Lys129. ATP is bound at residue 178-185; sequence GESGAGKT. Actin-binding stretches follow at residues 661–683 and 762–776; these read LGKL…IPNH and RIGQ…GVLA. Residues 786 to 815 enclose the IQ domain; the sequence is ITDVIMAFQAMCRGYLARKAFAKRQQQLTA. The stretch at 844–1934 forms a coiled coil; that stretch reads LLQVTRQEEE…KSKLRRGNET (1091 aa). The interval 858–882 is disordered; it reads EDELQKTKERQQKAENELKELEQKH. A Phosphothreonine modification is found at Thr1177. Phosphoserine occurs at positions 1684 and 1722. Disordered regions lie at residues 1744-1800 and 1866-1972; these read ELEE…LRSK and EQYK…KASE. Polar residues predominate over residues 1762–1788; that stretch reads ATQQAEQLSNELATERSTAQKNESARQ. Composition is skewed to basic and acidic residues over residues 1789-1800 and 1866-1876; these read QLERQNKELRSK and EQYKEQAEKGN. The tract at residues 1935 to 1972 is C-terminal; it reads SFVPSRRSGGRRVIENADGSEEETDTRDADFNGTKASE. Residue Ser1954 is modified to Phosphoserine. At Thr1958 the chain carries Phosphothreonine. A Phosphoserine modification is found at Ser1971.

This sequence belongs to the TRAFAC class myosin-kinesin ATPase superfamily. Myosin family. Muscle myosin is a hexameric protein that consists of 2 heavy chain subunits (MHC), 2 alkali light chain subunits (MLC) and 2 regulatory light chain subunits (MLC-2). In terms of tissue distribution, smooth muscle; expressed in the umbilical artery, bladder, esophagus and trachea. Isoform 1 is mostly found in slowly contracting tonic muscles.

It is found in the melanosome. In terms of biological role, muscle contraction. The sequence is that of Myosin-11 (MYH11) from Homo sapiens (Human).